A 303-amino-acid polypeptide reads, in one-letter code: Terpene synthase (303 aa).

Residues aspartate 69 and aspartate 73 each coordinate Mg(2+). The DDXXD motif signature appears at 69–73 (DDIQD).

This sequence belongs to the FPP/GGPP synthase family. Mg(2+) is required as a cofactor.

It carries out the reaction (2E)-geranyl diphosphate + H2O = (2E)-geraniol + diphosphate. Its function is as follows. Terpene synthase that is able to convert geraniol diphosphate to geraniol in tea leaves. The chain is Terpene synthase from Matsumurasca onukii (Tea green leafhopper).